The sequence spans 208 residues: Ras-related protein Rab-6A (208 aa).

An N-acetylserine modification is found at Ser2. GTP-binding residues include Ser23, Val24, Gly25, Lys26, Thr27, Ser28, Asp39, Asn40, Tyr42, and Thr45. Mg(2+) is bound at residue Thr27. The Switch 1 signature appears at 32–50 (RFMYDSFDNTYQATIGIDF). Thr45 and Asp68 together coordinate Mg(2+). A Switch 2 motif is present at residues 69 to 88 (TAGQERFRSLIPSYIRDSTV). GTP contacts are provided by Gly71, Asn126, Lys127, Asp129, Ser156, Ala157, and Lys158. Ser184 is modified (phosphoserine). Residues Cys206 and Cys208 are each lipidated (S-geranylgeranyl cysteine). Residue Cys208 is modified to Cysteine methyl ester.

It belongs to the small GTPase superfamily. Rab family. Interacts with BICDL1; leads to its accumulation in the pericentrosomal region. Interacts with SCYL1BP1. Interacts with VSP52. Interacts with RABGAP1. Interacts with GCC2 (via its GRIP domain). Interacts with RAB6IP1 (via its RUN 1 domain). Interacts with TMF1. Interacts with CIMAP3. Interacts (GTP-bound) with APBA1/MINT1 isoform 3, also called Mint1_826, but not with isoform 1. Interacts with RIC1; the interaction is direct with a preference for RAB6A-GDP. Interacts with RGP1; the interaction is direct with a preference for RAB6A-GDP. As to quaternary structure, interacts (GTP-bound) with DYNLRB1; the interaction is direct. Interacts with BICD1. Interacts with BICD2; the interaction is direct. Interacts (GTP-bound) with VPS13B. In terms of assembly, interacts with BICD1. Interacts (GDP-bound) with DYNLRB1; the interaction is direct. Interacts (GTP-bound) with VPS13B. Mg(2+) is required as a cofactor. In terms of processing, prenylated.

It localises to the golgi apparatus membrane. Its subcellular location is the cytoplasmic vesicle. It is found in the secretory vesicle. The protein localises to the acrosome membrane. The enzyme catalyses GTP + H2O = GDP + phosphate + H(+). With respect to regulation, regulated by guanine nucleotide exchange factors (GEFs) which promote the exchange of bound GDP for free GTP. Regulated by GTPase activating proteins (GAPs) which increase the GTP hydrolysis activity. Inhibited by GDP dissociation inhibitors (GDIs). Functionally, the small GTPases Rab are key regulators of intracellular membrane trafficking, from the formation of transport vesicles to their fusion with membranes. Rabs cycle between an inactive GDP-bound form and an active GTP-bound form that is able to recruit to membranes different sets of downstream effectors directly responsible for vesicle formation, movement, tethering and fusion. RAB6A acts as a regulator of COPI-independent retrograde transport from the Golgi apparatus towards the endoplasmic reticulum (ER). Has a low GTPase activity. Recruits VPS13B to the Golgi membrane. Plays a role in neuron projection development. The chain is Ras-related protein Rab-6A from Mus musculus (Mouse).